The chain runs to 212 residues: MEQQEEVPPPPAGLGLTAEEYAQVRATVEAHHRYAVGPGQCSSLLAQRIHAPPAAVWAVVRRFDCPQVYKHFIRSCVLRPDPHHDDNGNDLRPGRLREVSVISGLPASTSTERLDLLDDAHRVFGFTITGGEHRLRNYRSVTTVSQLDEICTLVLESYIVDVPDGNTEDDTRLFADTVIRLNLQKLKSVSEANANAAAAAAAPPPPPPAAAE.

Residues 34 to 191 form an START-like region; that stretch reads YAVGPGQCSS…NLQKLKSVSE (158 aa). Residues K70, 107–112, 134–140, and E156 contribute to the abscisate site; these read ASTSTE and RLRNYRS. The Gate loop signature appears at 103-107; the sequence is SGLPA. The Latch loop motif lies at 133–135; the sequence is HRL.

The protein belongs to the PYR/PYL/RCAR abscisic acid intracellular receptor family. As to quaternary structure, homodimer. Interacts with PP2C53. Binding to PP2C53 is dependent on the presence of abscisic acid (ABA). Interacts with PP2C50. Binding to PP2C50 is dependent on the presence of ABA.

Its subcellular location is the cytoplasm. It is found in the cytosol. The protein resides in the nucleus. Functionally, inhibits the protein phosphatases PP2C06 and PP2C09 when activated by abscisic acid (ABA). Together with PP2C53, SAPK8 and SAPK10, may form an ABA signaling module involved in stress response. In Oryza sativa subsp. japonica (Rice), this protein is Abscisic acid receptor PYL10.